Here is a 98-residue protein sequence, read N- to C-terminus: NADH-ubiquinone oxidoreductase chain 4L (98 aa).

The next 3 membrane-spanning stretches (helical) occupy residues 1-21 (MSIVYINIFLAFIMSLLGMLI), 29-49 (SLLCLEGMMLSLFVMITLIIL), and 61-81 (IILLVFAACEAALGLSLLVMV).

The protein belongs to the complex I subunit 4L family. Core subunit of respiratory chain NADH dehydrogenase (Complex I) which is composed of 45 different subunits.

It localises to the mitochondrion inner membrane. It catalyses the reaction a ubiquinone + NADH + 5 H(+)(in) = a ubiquinol + NAD(+) + 4 H(+)(out). Its function is as follows. Core subunit of the mitochondrial membrane respiratory chain NADH dehydrogenase (Complex I) which catalyzes electron transfer from NADH through the respiratory chain, using ubiquinone as an electron acceptor. Part of the enzyme membrane arm which is embedded in the lipid bilayer and involved in proton translocation. In Herpestes javanicus (Small Indian mongoose), this protein is NADH-ubiquinone oxidoreductase chain 4L (MT-ND4L).